The primary structure comprises 384 residues: 5-amino-6-(D-ribitylamino)uracil--L-tyrosine 4-hydroxyphenyl transferase 2 (384 aa).

In terms of domain architecture, Radical SAM core spans 53–286; sequence VSYVVNRNIY…IAISRVILHT (234 aa). The [4Fe-4S] cluster site is built by Cys-67, Cys-71, and Cys-74.

Belongs to the radical SAM superfamily. CofH family. In terms of assembly, consists of two subunits, CofG and CofH. It depends on [4Fe-4S] cluster as a cofactor.

The catalysed reaction is 5-amino-6-(D-ribitylamino)uracil + L-tyrosine + S-adenosyl-L-methionine = 5-amino-5-(4-hydroxybenzyl)-6-(D-ribitylimino)-5,6-dihydrouracil + 2-iminoacetate + 5'-deoxyadenosine + L-methionine + H(+). It participates in cofactor biosynthesis; coenzyme F0 biosynthesis. In terms of biological role, catalyzes the radical-mediated synthesis of 5-amino-5-(4-hydroxybenzyl)-6-(D-ribitylimino)-5,6-dihydrouracil from 5-amino-6-(D-ribitylamino)uracil and L-tyrosine. This chain is 5-amino-6-(D-ribitylamino)uracil--L-tyrosine 4-hydroxyphenyl transferase 2, found in Methanosarcina barkeri (strain Fusaro / DSM 804).